A 208-amino-acid polypeptide reads, in one-letter code: FMN-dependent NADH:quinone oxidoreductase (208 aa).

FMN is bound by residues Ser-9 and 15-17 (SHS).

It belongs to the azoreductase type 1 family. As to quaternary structure, homodimer. FMN serves as cofactor.

The catalysed reaction is 2 a quinone + NADH + H(+) = 2 a 1,4-benzosemiquinone + NAD(+). It carries out the reaction N,N-dimethyl-1,4-phenylenediamine + anthranilate + 2 NAD(+) = 2-(4-dimethylaminophenyl)diazenylbenzoate + 2 NADH + 2 H(+). In terms of biological role, quinone reductase that provides resistance to thiol-specific stress caused by electrophilic quinones. Its function is as follows. Also exhibits azoreductase activity. Catalyzes the reductive cleavage of the azo bond in aromatic azo compounds to the corresponding amines. The protein is FMN-dependent NADH:quinone oxidoreductase of Bordetella petrii (strain ATCC BAA-461 / DSM 12804 / CCUG 43448).